We begin with the raw amino-acid sequence, 325 residues long: ATP synthase gamma chain (325 aa).

Belongs to the ATPase gamma chain family. In terms of assembly, F-type ATPases have 2 components, CF(1) - the catalytic core - and CF(0) - the membrane proton channel. CF(1) has five subunits: alpha(3), beta(3), gamma(1), delta(1), epsilon(1). CF(0) has three main subunits: a, b and c.

The protein localises to the cell membrane. In terms of biological role, produces ATP from ADP in the presence of a proton gradient across the membrane. The gamma chain is believed to be important in regulating ATPase activity and the flow of protons through the CF(0) complex. This chain is ATP synthase gamma chain, found in Corynebacterium diphtheriae (strain ATCC 700971 / NCTC 13129 / Biotype gravis).